A 105-amino-acid polypeptide reads, in one-letter code: UPF0145 protein CPS_2458 (105 aa).

It belongs to the UPF0145 family.

The protein is UPF0145 protein CPS_2458 of Colwellia psychrerythraea (strain 34H / ATCC BAA-681) (Vibrio psychroerythus).